The chain runs to 200 residues: FMN-dependent NADH:quinone oxidoreductase (200 aa).

FMN is bound by residues Ser10 and 95–98 (MYNF).

Belongs to the azoreductase type 1 family. In terms of assembly, homodimer. Requires FMN as cofactor.

The enzyme catalyses 2 a quinone + NADH + H(+) = 2 a 1,4-benzosemiquinone + NAD(+). It catalyses the reaction N,N-dimethyl-1,4-phenylenediamine + anthranilate + 2 NAD(+) = 2-(4-dimethylaminophenyl)diazenylbenzoate + 2 NADH + 2 H(+). Quinone reductase that provides resistance to thiol-specific stress caused by electrophilic quinones. In terms of biological role, also exhibits azoreductase activity. Catalyzes the reductive cleavage of the azo bond in aromatic azo compounds to the corresponding amines. In Alteromonas mediterranea (strain DSM 17117 / CIP 110805 / LMG 28347 / Deep ecotype), this protein is FMN-dependent NADH:quinone oxidoreductase.